Consider the following 647-residue polypeptide: RalA-binding protein 1 (647 aa).

Disordered regions lie at residues 1 to 151 (MTEC…EKKC) and 163 to 186 (WKEK…APSL). Position 2 is an N-acetylthreonine (threonine 2). Residues 24 to 33 (LTRTPSSEEI) show a composition bias toward polar residues. Phosphoserine occurs at positions 29, 30, and 34. At threonine 44 the chain carries Phosphothreonine. 2 positions are modified to phosphoserine: serine 48 and serine 62. A compositionally biased stretch (basic and acidic residues) spans 52–68 (DILHEPPDIVSDDEKDH). 69 to 74 (GKKKGK) serves as a coordination point for ATP. The segment covering 69–79 (GKKKGKFKKKE) has biased composition (basic residues). 2 positions are modified to phosphoserine: serine 92 and serine 93. The segment covering 102–118 (KMKRSKGIHVFKKPSFS) has biased composition (basic residues). A nuclear localization signal region spans residues 102 to 119 (KMKRSKGIHVFKKPSFSK). Over residues 119 to 151 (KKKEKDFKIKEKPKEEKHKEEKHKEEKHKEKKC) the composition is skewed to basic and acidic residues. The interval 154 to 219 (FTAADVVKQW…PAVFRECVDY (66 aa)) is mediates association with membranes and could form transmembrane domains. Residues 192 to 380 (APFADAVERT…VLLKQVTRPL (189 aa)) form the Rho-GAP domain. A mediates interaction with RALA and RALB region spans residues 403 to 499 (RRQEFLLNCL…LTEQEELLAM (97 aa)). An ATP-binding site is contributed by 418-425 (GGIKDFSK). Residues serine 461 and serine 463 each carry the phosphoserine modification. The mediates interaction with REPS1 and REPS2 stretch occupies residues 500–647 (EQFLRRQIAS…PSKDRKETPI (148 aa)). 2 disordered regions span residues 525–550 (QSRQ…DEEE) and 601–647 (EQQL…ETPI). The span at 535–550 (EEYSSDSESESEDEEE) shows a compositional bias: acidic residues. Basic and acidic residues predominate over residues 628-647 (RAAKEQAKPSPSKDRKETPI). A Phosphoserine modification is found at serine 637.

In terms of assembly, interacts with the GTP-bound form of RALA (via effector domain); during mitosis, recruits RALBP1 to the mitochondrion where it promotes DNM1L phosphorylation and mitochondrial fission. Interacts with DNM1L; mediates its mitotic kinase cyclin B-CDK1-mediated phosphorylation during mitosis to promote mitochondrial fission. Interacts with the mitotic kinase cyclin B-CDK1 during mitosis. Interacts with the GTP-bound form of RALB (via effector domain). Interacts with REPS1; the interaction is direct and does not affect RALA-binding nor GTPase activator activity of RALBP1. Interacts with REPS2; the interaction is direct and does not affect RALA-binding nor GTPase activator activity of RALBP1. Interacts with EPN1, NUMB and TFAP2A during interphase and mitosis. Interacts with AP2M1; as part of the AP2 complex. Interacts with CDC42. Interacts with RAC1. In terms of processing, tyrosine-phosphorylated upon stimulation of cells with EGF. May undergo proteolytic cleavage to give peptides which reassemble to form a transporter complex. As to expression, ubiquitously expressed.

The protein resides in the cell membrane. Its subcellular location is the cytoplasm. It is found in the cytosol. It localises to the cytoskeleton. The protein localises to the spindle pole. The protein resides in the nucleus. Its subcellular location is the mitochondrion. It catalyses the reaction an S-substituted glutathione(in) + ATP + H2O = an S-substituted glutathione(out) + ADP + phosphate + H(+). It carries out the reaction ATP + H2O + xenobioticSide 1 = ADP + phosphate + xenobioticSide 2.. The catalysed reaction is leukotriene C4(in) + ATP + H2O = leukotriene C4(out) + ADP + phosphate + H(+). Multifunctional protein that functions as a downstream effector of RALA and RALB. As a GTPase-activating protein/GAP can inactivate CDC42 and RAC1 by stimulating their GTPase activity. As part of the Ral signaling pathway, may also regulate ligand-dependent EGF and insulin receptors-mediated endocytosis. During mitosis, may act as a scaffold protein in the phosphorylation of EPSIN/EPN1 by the mitotic kinase cyclin B-CDK1, preventing endocytosis during that phase of the cell cycle. During mitosis, also controls mitochondrial fission as an effector of RALA. Recruited to mitochondrion by RALA, acts as a scaffold to foster the mitotic kinase cyclin B-CDK1-mediated phosphorylation and activation of DNM1L. Functionally, could also function as a primary ATP-dependent active transporter for glutathione conjugates of electrophiles. May also actively catalyze the efflux of a wide range of substrates including xenobiotics like doxorubicin (DOX) contributing to cell multidrug resistance. In Rattus norvegicus (Rat), this protein is RalA-binding protein 1.